The primary structure comprises 97 residues: Small integral membrane protein 8 (97 aa).

Over residues 1 to 14 (MSSPSSESSNAKSS) the composition is skewed to low complexity. The interval 1-26 (MSSPSSESSNAKSSPPKEEYRTPGLR) is disordered. Residues 49 to 69 (VMVFGIVTITMCVAYIAYLHA) form a helical membrane-spanning segment.

This sequence belongs to the SMIM8 family.

It localises to the membrane. The sequence is that of Small integral membrane protein 8 (smim8) from Xenopus tropicalis (Western clawed frog).